A 255-amino-acid polypeptide reads, in one-letter code: Sorbose reductase sou1 (255 aa).

Positions 21 and 95 each coordinate NADP(+). Residues Ser148 and Tyr163 each act as proton donor in the active site. NADP(+) contacts are provided by Tyr163, Lys167, Ile195, and Thr197. The Lowers pKa of active site Tyr role is filled by Lys167.

This sequence belongs to the short-chain dehydrogenases/reductases (SDR) family.

The catalysed reaction is D-sorbitol + NADP(+) = keto-L-sorbose + NADPH + H(+). Functionally, catalyzes the NADP dependent reduction of L-sorbose to D-glucitol. This is Sorbose reductase sou1 (sou1) from Schizosaccharomyces pombe (strain 972 / ATCC 24843) (Fission yeast).